A 251-amino-acid polypeptide reads, in one-letter code: Probable transcriptional regulatory protein MAB_2888c (251 aa).

Residues 1 to 20 (MSGHSKWATTKHQKAVKDAR) are disordered.

It belongs to the TACO1 family.

It localises to the cytoplasm. In Mycobacteroides abscessus (strain ATCC 19977 / DSM 44196 / CCUG 20993 / CIP 104536 / JCM 13569 / NCTC 13031 / TMC 1543 / L948) (Mycobacterium abscessus), this protein is Probable transcriptional regulatory protein MAB_2888c.